The chain runs to 103 residues: Large ribosomal subunit protein bL21 (103 aa).

Belongs to the bacterial ribosomal protein bL21 family. Part of the 50S ribosomal subunit. Contacts protein L20.

This protein binds to 23S rRNA in the presence of protein L20. The chain is Large ribosomal subunit protein bL21 from Shewanella loihica (strain ATCC BAA-1088 / PV-4).